The following is a 246-amino-acid chain: Dof zinc finger protein DOF4.7 (246 aa).

Polar residues-rich tracts occupy residues M1 to G12 and Q27 to T37. The segment at M1 to P39 is disordered. The segment at L41–K95 adopts a Dof-type zinc-finger fold. Zn(2+) is bound by residues C43, C46, C68, and C71. The segment at G216–N235 is disordered.

In terms of assembly, interacts with ZFP2. Highly expressed at the base of all organs of the flower, especially in the abscission zone (AZ) of petals, stamens and sepals. Expressed at low levels in sepals, filaments, stigmatic papillae, tips of young siliques, and at the base of pedicels and leaf trichomes.

It localises to the nucleus. Functionally, transcription factor that binds specifically to a 5'-AA[AG]G-3' consensus core sequence. Involved in the negative regulation of floral organ abscission by binding to the typical DOF 5'-AAAG-3' sequences in the promoter of ADPG2/PGAZAT, and by down-regulating its expression. ADPG2/PGAZAT is an abscission-related and cell wall hydrolyzing polygalacturonase. May act through the interaction with ZFP2, an abscission-related transcription factor. This chain is Dof zinc finger protein DOF4.7, found in Arabidopsis thaliana (Mouse-ear cress).